Consider the following 392-residue polypeptide: uncharacterized protein (392 aa).

It belongs to the peptidase M24 family.

This is an uncharacterized protein from Sinorhizobium fredii (strain NBRC 101917 / NGR234).